The chain runs to 1227 residues: Pre-mRNA-splicing factor ATP-dependent RNA helicase PRP16 (1227 aa).

At Gly-2 the chain carries N-acetylglycine. Phosphoserine is present on Ser-56. Over residues 60–89 (REREEKDDGEDKKKSKVSSYKDWEESKDDQ) the composition is skewed to basic and acidic residues. Positions 60–320 (REREEKDDGE…ERQQWEDDQR (261 aa)) are disordered. At Thr-117 the chain carries Phosphothreonine. Residues 128–201 (FWERSRQRER…SRRNEPESPR (74 aa)) are compositionally biased toward basic and acidic residues. Phosphoserine is present on residues Ser-199 and Ser-224. Positions 222–239 (YGSSRRSQWESPSPTPSY) are enriched in polar residues. Residues 240–263 (RDSERSHRLSTRDRDRSVRGKYSD) show a composition bias toward basic and acidic residues. Lys-260 carries the N6-acetyllysine modification. Acidic residues predominate over residues 300–310 (GEEGISFDTEE). A compositionally biased stretch (basic and acidic residues) spans 311-320 (ERQQWEDDQR). Residues Lys-482, Lys-483, and Lys-504 each participate in a glycyl lysine isopeptide (Lys-Gly) (interchain with G-Cter in SUMO2) cross-link. The Helicase ATP-binding domain occupies 542-705 (LTIIRDNSIV…FGNVPIFHIP (164 aa)). 555–562 (GETGSGKT) serves as a coordination point for ATP. The short motif at 652-655 (DEAH) is the DEAH box element. Residues 727 to 902 (AVKQSLQVHL…NVVLLLKSLG (176 aa)) form the Helicase C-terminal domain. The disordered stretch occupies residues 1155–1227 (GKSRQENRRR…PRRTPARFGL (73 aa)). Composition is skewed to basic and acidic residues over residues 1157 to 1169 (SRQE…KEEA) and 1181 to 1194 (EQLR…EKRS). Lys-1166 is covalently cross-linked (Glycyl lysine isopeptide (Lys-Gly) (interchain with G-Cter in SUMO2)). Ser-1194 is subject to Phosphoserine.

The protein belongs to the DEAD box helicase family. DEAH subfamily. PRP16 sub-subfamily. As to quaternary structure, identified in the spliceosome C complex.

It localises to the nucleus. It catalyses the reaction ATP + H2O = ADP + phosphate + H(+). Its function is as follows. Probable ATP-binding RNA helicase. Involved in pre-mRNA splicing as component of the spliceosome. The sequence is that of Pre-mRNA-splicing factor ATP-dependent RNA helicase PRP16 (DHX38) from Homo sapiens (Human).